The sequence spans 744 residues: Cullin-3 (744 aa).

Positions 677–736 constitute a Cullin neddylation domain; it reads MELSAIIVRIMKTEGKLSHQQLLERTTKRTQSRLSLTPSILKRSIQLLIEKEYIQRNADD. A Glycyl lysine isopeptide (Lys-Gly) (interchain with G-Cter in NEDD8) cross-link involves residue Lys688.

It belongs to the cullin family. As to quaternary structure, component of a ubiquitin-protein ligase complex consisting of the cullin CUL3, the linker protein ELC1, the substrate receptor ELA1, and the RING protein HRT1. Post-translationally, neddylated; enhancing the ubiquitin-ligase activity.

It participates in protein modification; protein ubiquitination. Its function is as follows. As part of the CRL3 E3 ubiquitin ligase complex; polyubiquitylates monoubiquitylated RNA polymerase II subunit RPO21 to trigger its proteolysis; plays a role in global genomic repair. The chain is Cullin-3 (CUL3) from Saccharomyces cerevisiae (strain ATCC 204508 / S288c) (Baker's yeast).